Here is a 343-residue protein sequence, read N- to C-terminus: N-malonyltransferase FDB2 (343 aa).

Cys-107 (acyl-thioester intermediate) is an active-site residue. His-155 acts as the Proton acceptor in catalysis. Asp-170 is an active-site residue.

Belongs to the arylamine N-acetyltransferase family.

Its pathway is xenobiotic degradation. N-malonyltransferase; part of the Fusarium detoxification of benzoxazolinone cluster involved in the degradation of benzoxazolinones produced by the host plant. Maize, wheat, and rye produce the 2 benzoxazinone phytoanticipins 2,4-dihy-droxy-7-methoxy-1,4-benzoxazin-3-one (DIMBOA) and 2,4-dihydroxy-1,4-benzoxazin-3-one (DIBOA) that, due to their inherent instability once released, spontaneously degrade to the more stable corresponding benzoxazolinones, 6-methoxy-2-benzoxazolinone (MBOA) and 2-benzoxazolinone (BOA), respectively. The first step in the detoxification of benzoxazolinones involves the hydrolysis of the cyclic ester bond of benzoxazolinones by the gamma-lactamase FDB1 to aminophenols. FDB1 is able to convert BOA into 2-aminophenol (2-AP), as well as MBOA into 5-methoxy-2-aminophenol (2-AMP). The N-malonyltransferase FDB2 then metabolizes aminophenols via N-malonylation to non-toxic malonamic acids. FDB2 converts 2-AP into N-(2-hydroxyphenyl) malonamic acid (HPMA) and 2-AMP into N-(2-hydroxy-4-methoxyphenyl) malonamic acid (HMPMA). The cluster also contains 2 transcription factors (FDB3 and FPSE_08121), an aldo-keto reductase (FPSE_08125) that possibly associates with a ketone component of BOA and MBOA degradation, an esterase (FPSE_08126), an acyl-CoA transferase (FPSE_08120), a solute carrier protein (FPSE_08119) and a transmembrane transporter (FPSE_08127) proposed to shuttle metabolites of benzoxazolinone degradation. This chain is N-malonyltransferase FDB2, found in Fusarium pseudograminearum (strain CS3096) (Wheat and barley crown-rot fungus).